The following is a 162-amino-acid chain: Transcriptional repressor NrdR (162 aa).

The disordered stretch occupies residues 1 to 21 (MNCPDCGNGRTRVIDTGASSD). Residues 3–34 (CPDCGNGRTRVIDTGASSDGASVRRRRECQRC) fold into a zinc finger. Residues 49–139 (LQVKKRDGTI…VYKAFSEPQE (91 aa)) form the ATP-cone domain.

Belongs to the NrdR family. The cofactor is Zn(2+).

Negatively regulates transcription of bacterial ribonucleotide reductase nrd genes and operons by binding to NrdR-boxes. This chain is Transcriptional repressor NrdR, found in Natronomonas pharaonis (strain ATCC 35678 / DSM 2160 / CIP 103997 / JCM 8858 / NBRC 14720 / NCIMB 2260 / Gabara) (Halobacterium pharaonis).